Consider the following 459-residue polypeptide: Argininosuccinate lyase (459 aa).

It belongs to the lyase 1 family. Argininosuccinate lyase subfamily.

Its subcellular location is the cytoplasm. It carries out the reaction 2-(N(omega)-L-arginino)succinate = fumarate + L-arginine. The protein operates within amino-acid biosynthesis; L-arginine biosynthesis; L-arginine from L-ornithine and carbamoyl phosphate: step 3/3. In Prochlorococcus marinus (strain AS9601), this protein is Argininosuccinate lyase.